The following is a 159-amino-acid chain: Glutamate-rich protein GrpA (159 aa).

In Alkalihalophilus pseudofirmus (strain ATCC BAA-2126 / JCM 17055 / OF4) (Bacillus pseudofirmus), this protein is Glutamate-rich protein GrpA (grpA).